The chain runs to 447 residues: Dihydroorotase (447 aa).

Zn(2+) contacts are provided by His-81 and His-83. Substrate-binding positions include 83 to 85 and Asn-115; that span reads HFR. Asp-171, His-198, and His-252 together coordinate Zn(2+). Substrate is bound at residue Asn-298. Asp-325 provides a ligand contact to Zn(2+). Residue Asp-325 is part of the active site. Substrate is bound by residues His-329 and 343 to 344; that span reads FG.

It belongs to the metallo-dependent hydrolases superfamily. DHOase family. Class I DHOase subfamily. It depends on Zn(2+) as a cofactor.

It carries out the reaction (S)-dihydroorotate + H2O = N-carbamoyl-L-aspartate + H(+). It functions in the pathway pyrimidine metabolism; UMP biosynthesis via de novo pathway; (S)-dihydroorotate from bicarbonate: step 3/3. Functionally, catalyzes the reversible cyclization of carbamoyl aspartate to dihydroorotate. This is Dihydroorotase from Ehrlichia canis (strain Jake).